A 210-amino-acid chain; its full sequence is Dof zinc finger protein DOF4.4 (210 aa).

Residues 24-78 form a Dof-type zinc finger; sequence RVCPRCDSDNTKFCFYNNYSESQPRYFCKNCRRYWTHGGALRNIPVGGSCRKPKR. Residues Cys26, Cys29, Cys51, and Cys54 each coordinate Zn(2+).

It localises to the nucleus. Functionally, transcription factor that binds specifically to a 5'-AA[AG]G-3' consensus core sequence. The sequence is that of Dof zinc finger protein DOF4.4 (DOF4.4) from Arabidopsis thaliana (Mouse-ear cress).